Here is a 960-residue protein sequence, read N- to C-terminus: Probable RNA-binding protein 19 (960 aa).

Residues 2 to 79 enclose the RRM 1 domain; that stretch reads SRLIVKNLPN…SRITVEFCKS (78 aa). 2 disordered regions span residues 85-119 and 149-294; these read KPRAWSKHAQKPSQPKQPPKDSTTPEIKKDEKKKK and WAND…TTCH. Residues serine 174, serine 176, and serine 180 each carry the phosphoserine modification. Over residues 176–194 the composition is skewed to acidic residues; it reads SGQESEEEGAGEDLEEEAS. Residues 273–286 show a composition bias toward basic and acidic residues; the sequence is RPPEARAETEKPAN. RRM domains lie at 294 to 369 and 402 to 480; these read HTVK…REKN and GRLF…PSTI. Residue lysine 481 forms a Glycyl lysine isopeptide (Lys-Gly) (interchain with G-Cter in SUMO2) linkage. The disordered stretch occupies residues 491–513; that stretch reads LGSSSYKKKKEAQDKANSASSHN. Residues 587–659 form the RRM 4 domain; that stretch reads TVILVKNLPA…VPLYLEWAPV (73 aa). The segment at 667-729 is disordered; the sequence is PQKKKLQDTP…EEEEEESLPG (63 aa). Composition is skewed to acidic residues over residues 689–706 and 714–726; these read TVPDGETPEDENPTEEGA and EEEEEEEEEEEES. RRM domains lie at 730-811 and 832-912; these read CTLF…ISER and SKIL…WADS. A phosphoserine mark is found at serine 936, serine 949, and serine 951.

The protein belongs to the RRM MRD1 family. Expressed in the crypts of Lieberkuhn of the intestine and in intestinal neoplasia (at protein level).

The protein localises to the nucleus. Its subcellular location is the nucleolus. It is found in the nucleoplasm. The protein resides in the cytoplasm. It localises to the chromosome. Plays a role in embryo pre-implantation development. The polypeptide is Probable RNA-binding protein 19 (RBM19) (Homo sapiens (Human)).